We begin with the raw amino-acid sequence, 80 residues long: Large ribosomal subunit protein uL30 (80 aa).

The protein belongs to the universal ribosomal protein uL30 family. As to quaternary structure, part of the 50S ribosomal subunit.

The protein is Large ribosomal subunit protein uL30 of Vesicomyosocius okutanii subsp. Calyptogena okutanii (strain HA).